The chain runs to 137 residues: Large ribosomal subunit protein uL16 (137 aa).

This sequence belongs to the universal ribosomal protein uL16 family. In terms of assembly, part of the 50S ribosomal subunit.

Functionally, binds 23S rRNA and is also seen to make contacts with the A and possibly P site tRNAs. This is Large ribosomal subunit protein uL16 from Streptococcus thermophilus (strain CNRZ 1066).